A 387-amino-acid polypeptide reads, in one-letter code: S-adenosylmethionine synthase (387 aa).

Histidine 17 contributes to the ATP binding site. Residue aspartate 19 participates in Mg(2+) binding. Glutamate 45 is a K(+) binding site. L-methionine is bound by residues glutamate 58 and glutamine 101. The interval 101–111 is flexible loop; it reads QSPDIAQGVDR. Residues 168–170, 234–235, aspartate 243, 249–250, alanine 266, and lysine 270 each bind ATP; these read DAK, RF, and RK. Aspartate 243 lines the L-methionine pocket. Lysine 274 is an L-methionine binding site.

Belongs to the AdoMet synthase family. As to quaternary structure, homotetramer; dimer of dimers. The cofactor is Mg(2+). K(+) is required as a cofactor.

The protein resides in the cytoplasm. The enzyme catalyses L-methionine + ATP + H2O = S-adenosyl-L-methionine + phosphate + diphosphate. Its pathway is amino-acid biosynthesis; S-adenosyl-L-methionine biosynthesis; S-adenosyl-L-methionine from L-methionine: step 1/1. Its function is as follows. Catalyzes the formation of S-adenosylmethionine (AdoMet) from methionine and ATP. The overall synthetic reaction is composed of two sequential steps, AdoMet formation and the subsequent tripolyphosphate hydrolysis which occurs prior to release of AdoMet from the enzyme. The chain is S-adenosylmethionine synthase from Bordetella petrii (strain ATCC BAA-461 / DSM 12804 / CCUG 43448).